Reading from the N-terminus, the 588-residue chain is Aspartate--tRNA ligase (588 aa).

L-aspartate is bound at residue Glu177. The tract at residues 201 to 204 (QLFK) is aspartate. Residue Arg223 coordinates L-aspartate. ATP contacts are provided by residues 223-225 (RDE) and Gln232. His451 contributes to the L-aspartate binding site. ATP is bound at residue Glu485. L-aspartate is bound at residue Arg492. Position 537-540 (537-540 (GLDR)) interacts with ATP.

This sequence belongs to the class-II aminoacyl-tRNA synthetase family. Type 1 subfamily. Homodimer.

It localises to the cytoplasm. It catalyses the reaction tRNA(Asp) + L-aspartate + ATP = L-aspartyl-tRNA(Asp) + AMP + diphosphate. Its function is as follows. Catalyzes the attachment of L-aspartate to tRNA(Asp) in a two-step reaction: L-aspartate is first activated by ATP to form Asp-AMP and then transferred to the acceptor end of tRNA(Asp). This Staphylococcus aureus (strain Newman) protein is Aspartate--tRNA ligase.